The chain runs to 436 residues: 3-ketoacyl-CoA thiolase (436 aa).

Residue Cys-99 is the Acyl-thioester intermediate of the active site. Active-site proton acceptor residues include His-392 and Cys-422.

It belongs to the thiolase-like superfamily. Thiolase family. As to quaternary structure, heterotetramer of two alpha chains (FadJ) and two beta chains (FadI).

It is found in the cytoplasm. The catalysed reaction is an acyl-CoA + acetyl-CoA = a 3-oxoacyl-CoA + CoA. Its pathway is lipid metabolism; fatty acid beta-oxidation. In terms of biological role, catalyzes the final step of fatty acid oxidation in which acetyl-CoA is released and the CoA ester of a fatty acid two carbons shorter is formed. The sequence is that of 3-ketoacyl-CoA thiolase from Escherichia coli (strain K12 / MC4100 / BW2952).